We begin with the raw amino-acid sequence, 5588 residues long: Histone-lysine N-methyltransferase 2D (5588 aa).

The interval 1 to 61 (MDSQKPPAED…QKPPHDCSRG (61 aa)) is disordered. A C2HC pre-PHD-type 1; degenerate zinc finger spans residues 104 to 149 (GPCEAVLPKEDASQIGFPEGLTPAHLGEPGGHCWAHHWCAAWSAGV). PHD-type zinc fingers lie at residues 170–218 (QRCS…PEHS) and 270–323 (CPEC…CRLC). A PHD-type 2; degenerate zinc finger spans residues 226–276 (EARCAVCEGPGQLCDLLFCTSCGHHYHGACLDTALTARKRASWQCPECKVC). An RING-type 1; atypical zinc finger spans residues 229–274 (CAVCEGPGQLCDLLFCTSCGHHYHGACLDTALTARKRASWQCPECK). The segment at 276 to 321 (CQSCRKPGNDSKMLVCETCDKGYHTFCLKPPMEDLPAHSWKCKTCR) adopts an RING-type 2; degenerate zinc-finger fold. Disordered stretches follow at residues 438-908 (MPLL…SPII) and 922-1315 (LEYP…DDDT). The tract at residues 439–642 (PLLPPPEESP…VSRLSPPPEE (204 aa)) is 15 X 5 AA repeats of S/P-P-P-E/P-E/A. Over residues 440–463 (LLPPPEESPLSPPPEESPTSPPPE) the composition is skewed to pro residues. 4 repeat units span residues 442 to 446 (PPPEE), 460 to 464 (PPPEA), 469 to 473 (PPTEE), and 477 to 481 (SPPPE). The segment covering 464–475 (ASRLSPPTEESP) has biased composition (low complexity). Pro residues-rich tracts occupy residues 490 to 512 (GCPPSPALDTPLSPPPEASPLSP) and 519 to 560 (LSPP…PPPE). Tandem repeats lie at residues 520 to 524 (SPPPE), 529 to 533 (SPPPE), 538 to 542 (SPPPE), and 547 to 551 (SPPPE). The span at 561–572 (ASRLFPPFEESP) shows a compositional bias: low complexity. Over residues 573–614 (LSPPPEDSPLSPPPEASRLSPPPEDSPMSPPPEDSPMSPPPE) the composition is skewed to pro residues. 4 repeat units span residues 574–578 (SPPPE), 583–587 (SPPPE), 592–596 (SPPPE), and 610–614 (SPPPE). Over residues 619-636 (LPLPVLSHLSPLPEVSRL) the composition is skewed to low complexity. Residues 637–641 (SPPPE) form repeat 15. The span at 637 to 677 (SPPPEESPLSPPPEDSPASPPPEASRLSPPPEDSPASPPPE) shows a compositional bias: pro residues. Residues 696-712 (DSLVSLPMEESPLSPLP) are compositionally biased toward low complexity. Position 727 is a phosphoserine (Ser727). Composition is skewed to low complexity over residues 735–755 (LCPQPEELPLSPQSEEPCLSP), 836–851 (PSQSSAPKELSLFSPS), and 876–893 (LPEELPLSLSGEPVLSPQ). 3 stretches are compositionally biased toward pro residues: residues 894–908 (LMPPDPLPPPLSPII), 959–973 (EPVPPMILPPSPGSP), and 985–1012 (LPPPCSPLLPHSLPPPTPPPSHCSPPAL). The span at 1013-1023 (PLSVPSPLSPV) shows a compositional bias: low complexity. The span at 1033 to 1045 (AELHEMETDKGPE) shows a compositional bias: basic and acidic residues. 3 PHD-type zinc fingers span residues 1071–1124 (PSPA…PMEV), 1121–1171 (PMEV…SQGD), and 1198–1253 (LGVS…SPAR). At Ser1107 the chain carries Phosphoserine. Over residues 1163-1172 (EISNLSQGDA) the composition is skewed to polar residues. The segment at 1201-1251 (STDVSPARDEGSLRLCTDSLPETDDSLLCDTGTATSGGKAEGDKGRRRSSP) adopts an RING-type 3; atypical zinc-finger fold. Phosphoserine is present on Ser1205. Residue Thr1223 is modified to Phosphothreonine. Ser1226 carries the post-translational modification Phosphoserine. A compositionally biased stretch (basic residues) spans 1245–1258 (GRRRSSPARSRIKQ). Residue Ser1562 is modified to Phosphoserine. 4 disordered regions span residues 1566 to 1721 (KRRQ…SKLE), 1751 to 1846 (GRPG…MESK), 1886 to 1962 (GLAL…SLQR), and 2095 to 2641 (SADG…QRQR). The segment covering 1593–1608 (PDDKKDGDLDTDDLLK) has biased composition (basic and acidic residues). Ser1627 is modified (phosphoserine). Residues 1631–1641 (ELGKEETEESK) are compositionally biased toward basic and acidic residues. Composition is skewed to basic residues over residues 1658–1668 (RQRKSHTRVKR) and 1709–1718 (KQQRRARKKS). The segment covering 1762–1782 (PRADGGSDRKELMTAMHKGDD) has biased composition (basic and acidic residues). Residue Ser1791 is modified to Phosphoserine. Thr1822 bears the Phosphothreonine mark. The span at 1831–1846 (DLDRIPTEELPKMESK) shows a compositional bias: basic and acidic residues. Composition is skewed to low complexity over residues 1886–1896 (GLALGSLPSSS) and 1936–1947 (TTPSTPTTPTTE). Pro residues predominate over residues 2151 to 2166 (PTYPPYPSPTGAPAQP). Over residues 2170–2181 (GTTTRPGTGQPG) the composition is skewed to low complexity. The residue at position 2196 (Ser2196) is a Phosphoserine. A Phosphothreonine modification is found at Thr2197. At Lys2203 the chain carries N6-acetyllysine. Residues Ser2217 and Ser2231 each carry the phosphoserine modification. A compositionally biased stretch (basic and acidic residues) spans 2237 to 2249 (ESRKSLEVKKEEL). Phosphoserine occurs at positions 2266, 2268, and 2299. 2 stretches are compositionally biased toward pro residues: residues 2308-2322 (EPPPAQALAPSPPSH) and 2331-2359 (YPDPYAQPPLTPRPQPPPPESCCAPPPRS). A compositionally biased stretch (low complexity) spans 2366–2388 (SRVPASPQSQSSSQSPLTPRPLS). Polar residues predominate over residues 2470-2486 (GQPTNFARSPGTGTFVG). Arg2492 is subject to Asymmetric dimethylarginine. Over residues 2504–2514 (LKPPVPQPGLP) the composition is skewed to pro residues. Residues 2546 to 2557 (PSGSPLGPNSGP) show a composition bias toward low complexity. Residue Ser2597 is modified to Phosphoserine. The segment covering 2610 to 2622 (SSSSLATPELSSA) has biased composition (low complexity). Positions 2627–2665 (ISSLSQTELEKQRQRQRLRELLIRQQIQRNTLRQEKETA) form a coiled coil. The short motif at 2644–2648 (LRELL) is the LXXLL motif 1 element. A disordered region spans residues 2655-2806 (RNTLRQEKET…QLWQQQQQQQ (152 aa)). Residues 2665 to 2680 (AAAAAGAVGPPGNWGA) are compositionally biased toward low complexity. 2 stretches are compositionally biased toward polar residues: residues 2691–2704 (SRGQTPFTGSQDRS) and 2739–2748 (PSSMDMNSRQ). The stretch at 2768–2813 (LQQQQQQQQQQQQQQQQQQQQQQQQQQQQQLWQQQQQQQQQQQQQA) forms a coiled coil. Residues 2769-2806 (QQQQQQQQQQQQQQQQQQQQQQQQQQQQQLWQQQQQQQ) are compositionally biased toward low complexity. Arg2829 carries the asymmetric dimethylarginine modification. An LXXLL motif 2 motif is present at residues 3030–3034 (LDDLL). The disordered stretch occupies residues 3069–3104 (NEKAEREALLRGVEPVSLGPEERPPPAPDNSEPRLT). Residue Lys3071 is modified to N6-acetyllysine. A phosphoserine mark is found at Ser3122 and Ser3193. 2 disordered regions span residues 3129–3193 (NTPK…LNPS) and 3271–3326 (QQQQ…QSMV). Over residues 3271–3284 (QQQQQQQQQQQQQQ) the composition is skewed to low complexity. The residue at position 3430 (Lys3430) is an N6-acetyllysine. 4 disordered regions span residues 3460–3496 (SGGSGSDLQNHVAPGSGQERNAGDPAQPRPNPPTFAQ), 3593–3617 (RNKQQQQQQQQQQQQQQQHSAVLAV), 3633–3661 (LLPAHGLQPPQAPPGGQAGGLRLPPGGMV), and 3678–3704 (QQQQQHSGVAGSLTGPPGSFFPGNLAL). The stretch at 3559–3613 (EKLKLVTEQQSKIQKQLDQVRKQQKEHTNLMAEYRNKQQQQQQQQQQQQQQQHSA) forms a coiled coil. A compositionally biased stretch (low complexity) spans 3596 to 3610 (QQQQQQQQQQQQQQQ). A coiled-coil region spans residues 3712 to 3747 (RLLQERQLQLQQQRMQLAQKLQQQQQQQQQQQQQQH). Residue Arg3725 is modified to Asymmetric dimethylarginine. 2 disordered regions span residues 3760-3780 (PGVQNQALGPKPQGLLPPSNH) and 3808-3827 (LQQQQQQQQHSGALGPQGPH). 2 coiled-coil regions span residues 3854–3883 (RLLTAQQQQQQQQQQQQQQQQQQQQQQQQQ) and 3912–4052 (SLQQ…QVTL). Residues 4053 to 4249 (GPGLPVKPLQ…QGPPGAGVMP (197 aa)) form a disordered region. 3 stretches are compositionally biased toward low complexity: residues 4128–4159 (SQLLLVQSQAQSQATSVQLQPPLRLPGQPQPQ), 4172–4183 (GQQLGSGSSSES), and 4226–4240 (GSQPPKSGPAPQSGQ). The residue at position 4255 (Arg4255) is an Asymmetric dimethylarginine. Phosphoserine is present on Ser4272. The LXXLL motif 3 signature appears at 4279 to 4283 (LQALL). The segment at 4290–4452 (QSQAVRQTPP…SSLVPGHLDQ (163 aa)) is disordered. Positions 4294–4305 (VRQTPPFQEPGT) are enriched in polar residues. Over residues 4307–4322 (PSPLQGLLGCQPQPGG) the composition is skewed to low complexity. An LXXLL motif 4 motif is present at residues 4310 to 4314 (LQGLL). Positions 4379–4391 (QLPSPSAQLTPTH) are enriched in polar residues. Ser4410 is modified (phosphoserine). The segment covering 4432 to 4445 (DNLTEAQKPEQSSL) has biased composition (polar residues). Positions 4514–4518 (LQKLL) match the LXXLL motif 5 motif. Lys4516 is modified (N6-acetyllysine). Disordered stretches follow at residues 4553–4596 (LQGT…EDGV), 4664–4716 (KNNL…EGAL), and 4729–4778 (AALP…QLGS). Pro residues predominate over residues 4670–4684 (PPTPPSSLPPTPPPS). Ser4789 bears the Phosphoserine mark. Lys4807 is covalently cross-linked (Glycyl lysine isopeptide (Lys-Gly) (interchain with G-Cter in SUMO2)). Lys4827 carries the N6-acetyllysine modification. An RING-type 4; degenerate zinc finger spans residues 4829–4874 (KGSEVSVMLTVSAAAAKNLNGVMVAVAELLSMKIPNSYEVLFPDGP). Residues 4877–4908 (AGLEPKKGEAEGPGGKEKGLSGKGPDTGPDWL) form a disordered region. Over residues 4879 to 4896 (LEPKKGEAEGPGGKEKGL) the composition is skewed to basic and acidic residues. Lys4931 is covalently cross-linked (Glycyl lysine isopeptide (Lys-Gly) (interchain with G-Cter in SUMO2)). The disordered stretch occupies residues 4956-5031 (QLSAPPPEEP…SEDSRPPRLK (76 aa)). Over residues 4959 to 4982 (APPPEEPSPPPSPLAPSPASPPAE) the composition is skewed to pro residues. Residues 5017–5027 (RPPEESEDSRP) show a composition bias toward basic and acidic residues. The LXXLL motif 6 signature appears at 5041 to 5045 (LRLLL). A C2HC pre-PHD-type 2 zinc finger spans residues 5080-5120 (NRRCCFCHEEGDGATDGPARLLNLDLDLWVHLNCALWSTEV). The segment at 5141–5188 (TKCSLCQRTGATSSCNRMRCPNVYHFACAIRAKCMFFKDKTMLCPVHK) adopts a PHD-type 7 zinc-finger fold. In terms of domain architecture, FYR N-terminal spans 5226–5286 (LHMFRVGGLV…CCYRCSISEN (61 aa)). In terms of domain architecture, FYR C-terminal spans 5287 to 5372 (NGRPEFVIKV…ESCQNYLFRY (86 aa)). Residues 5388-5393 (GCARSE) carry the WDR5 interaction motif (WIN) motif. The 117-residue stretch at 5448-5564 (NNVYLARSRI…KGEELTYDYQ (117 aa)) folds into the SET domain. S-adenosyl-L-methionine contacts are provided by residues Tyr5502 and 5525–5526 (NH). Residues Cys5528, Cys5576, Cys5578, and Cys5583 each contribute to the Zn(2+) site. The region spanning 5572–5588 (HKIPCHCGAWNCRKWMN) is the Post-SET domain.

The protein belongs to the class V-like SAM-binding methyltransferase superfamily. Histone-lysine methyltransferase family. TRX/MLL subfamily. In terms of assembly, component of the MLL2 complex (also named ASCOM complex), at least composed of catalytic subunit KMT2D/MLL2, ASH2L, RBBP5, WDR5, NCOA6, DPY30, KDM6A, PAXIP1/PTIP, PAGR1 and alpha- and beta-tubulin. Forms a core complex with the evolutionary conserved subcomplex WRAD composed of WDR5, RBBP5, ASH2L/ASH2 and DPY30 subunits; WRAD differentially stimulates the methyltransferase activity. Interacts with ESR1; interaction is direct. Interacts (via WIN motif) with WDR5.

The protein localises to the nucleus. The enzyme catalyses L-lysyl(4)-[histone H3] + S-adenosyl-L-methionine = N(6)-methyl-L-lysyl(4)-[histone H3] + S-adenosyl-L-homocysteine + H(+). In terms of biological role, histone methyltransferase that catalyzes methyl group transfer from S-adenosyl-L-methionine to the epsilon-amino group of 'Lys-4' of histone H3 (H3K4). Part of chromatin remodeling machinery predominantly forms H3K4me1 methylation marks at active chromatin sites where transcription and DNA repair take place. Acts as a coactivator for estrogen receptor by being recruited by ESR1, thereby activating transcription. The chain is Histone-lysine N-methyltransferase 2D (Kmt2d) from Mus musculus (Mouse).